The primary structure comprises 438 residues: Enolase (438 aa).

Residue glutamine 174 coordinates (2R)-2-phosphoglycerate. Glutamate 216 acts as the Proton donor in catalysis. Residues aspartate 253, glutamate 297, and aspartate 324 each contribute to the Mg(2+) site. 4 residues coordinate (2R)-2-phosphoglycerate: lysine 349, arginine 378, serine 379, and lysine 400. Lysine 349 serves as the catalytic Proton acceptor.

It belongs to the enolase family. As to quaternary structure, component of the RNA degradosome, a multiprotein complex involved in RNA processing and mRNA degradation. The cofactor is Mg(2+).

The protein resides in the cytoplasm. It is found in the secreted. The protein localises to the cell surface. It carries out the reaction (2R)-2-phosphoglycerate = phosphoenolpyruvate + H2O. It participates in carbohydrate degradation; glycolysis; pyruvate from D-glyceraldehyde 3-phosphate: step 4/5. In terms of biological role, catalyzes the reversible conversion of 2-phosphoglycerate (2-PG) into phosphoenolpyruvate (PEP). It is essential for the degradation of carbohydrates via glycolysis. This is Enolase from Psychrobacter sp. (strain PRwf-1).